Here is a 140-residue protein sequence, read N- to C-terminus: Hemoglobin subunit beta (140 aa).

The Globin domain maps to 1–140; the sequence is GSDLVSGFWG…VGDALAKAYH (140 aa). Heme b-binding residues include histidine 57 and histidine 86.

Belongs to the globin family. As to quaternary structure, heterotetramer of two alpha chains and two beta chains. Red blood cells.

Functionally, involved in oxygen transport from the lung to the various peripheral tissues. The protein is Hemoglobin subunit beta (HBB) of Pelophylax lessonae (Pool frog).